The sequence spans 217 residues: MARIPGRPDYDALIKLLLVGDSGVGKSCLLLRFTDDMFTSSFITTIGIDFKIKKVDVDGKLVKLQIWDTAGQERFRTITSAYYRGAQGIILVYDITDEASFNNVRNWMRNIEQHASDNVNKILVGNKLDLAEDKRVVSIARGQALADEFGFRFYETSAKDNVHVEEAFIAVAKDVLARMEGEHANQQLLQQQQLSAAQPVRLTSGSPSPAQGKSCCR.

20–27 (GDSGVGKS) lines the GTP pocket. The Effector region signature appears at 42 to 50 (FITTIGIDF). GTP-binding positions include 68–72 (DTAGQ) and 126–129 (NKLD). Residues 198-217 (QPVRLTSGSPSPAQGKSCCR) form a disordered region. The segment covering 201 to 211 (RLTSGSPSPAQ) has biased composition (polar residues). Residues C215 and C216 are each lipidated (S-geranylgeranyl cysteine).

This sequence belongs to the small GTPase superfamily. Rab family.

It localises to the cell membrane. Protein transport. Probably involved in vesicular traffic. This is GTP-binding protein yptV2 (YPTV2) from Volvox carteri (Green alga).